An 813-amino-acid polypeptide reads, in one-letter code: Leucine--tRNA ligase (813 aa).

Positions 42-52 (PYTSGNLHIGH) match the 'HIGH' region motif. The short motif at 580-584 (KMSKS) is the 'KMSKS' region element. Position 583 (Lys-583) interacts with ATP.

This sequence belongs to the class-I aminoacyl-tRNA synthetase family.

It localises to the cytoplasm. It carries out the reaction tRNA(Leu) + L-leucine + ATP = L-leucyl-tRNA(Leu) + AMP + diphosphate. The sequence is that of Leucine--tRNA ligase from Dehalococcoides mccartyi (strain ATCC BAA-2100 / JCM 16839 / KCTC 5957 / BAV1).